Reading from the N-terminus, the 241-residue chain is Probable transcriptional regulatory protein RALTA_A0859 (241 aa).

It belongs to the TACO1 family.

It is found in the cytoplasm. The polypeptide is Probable transcriptional regulatory protein RALTA_A0859 (Cupriavidus taiwanensis (strain DSM 17343 / BCRC 17206 / CCUG 44338 / CIP 107171 / LMG 19424 / R1) (Ralstonia taiwanensis (strain LMG 19424))).